The primary structure comprises 125 residues: Succinate dehydrogenase cytochrome b556 subunit (125 aa).

The Cytoplasmic portion of the chain corresponds to 1 to 22 (MNAKRPVNLDLTKFHFPPMAIL). Residues 23–48 (SIGHRISGFVLFLCMPLMFYLLHRAT) traverse the membrane as a helical segment. Residues 49-65 (ASAESFYHLHQLLLHNG) lie on the Periplasmic side of the membrane. Residues 66–86 (WIKLAVWIMLSATLFHLFAGI) traverse the membrane as a helical segment. His-81 is a heme binding site. Residues 87–104 (RHLAMDLGFWESVPEGRI) lie on the Cytoplasmic side of the membrane. The chain crosses the membrane as a helical span at residues 105–125 (SAYTVFVVSFIAIVLAGVWIW).

This sequence belongs to the cytochrome b560 family. Part of an enzyme complex containing four subunits: a flavoprotein, an iron-sulfur protein, plus two membrane-anchoring proteins, SdhC and SdhD. The complex can form homotrimers. The cofactor is heme.

Its subcellular location is the cell inner membrane. Its pathway is carbohydrate metabolism; tricarboxylic acid cycle. Membrane-anchoring subunit of succinate dehydrogenase (SDH). The protein is Succinate dehydrogenase cytochrome b556 subunit (sdhC) of Coxiella burnetii (strain RSA 493 / Nine Mile phase I).